The primary structure comprises 391 residues: Histidinol-phosphate aminotransferase (391 aa).

Lysine 248 bears the N6-(pyridoxal phosphate)lysine mark.

The protein belongs to the class-II pyridoxal-phosphate-dependent aminotransferase family. Histidinol-phosphate aminotransferase subfamily. As to quaternary structure, homodimer. It depends on pyridoxal 5'-phosphate as a cofactor.

The enzyme catalyses L-histidinol phosphate + 2-oxoglutarate = 3-(imidazol-4-yl)-2-oxopropyl phosphate + L-glutamate. The protein operates within amino-acid biosynthesis; L-histidine biosynthesis; L-histidine from 5-phospho-alpha-D-ribose 1-diphosphate: step 7/9. The chain is Histidinol-phosphate aminotransferase from Shewanella oneidensis (strain ATCC 700550 / JCM 31522 / CIP 106686 / LMG 19005 / NCIMB 14063 / MR-1).